A 224-amino-acid polypeptide reads, in one-letter code: Orotate phosphoribosyltransferase (224 aa).

5-phospho-alpha-D-ribose 1-diphosphate is bound by residues Lys-26, 73-74 (YK), Arg-100, Lys-101, Lys-104, His-106, and 127-135 (EDVTTAGTS). Orotate is bound by residues Thr-131 and Arg-160.

This sequence belongs to the purine/pyrimidine phosphoribosyltransferase family. PyrE subfamily. As to quaternary structure, homodimer. Mg(2+) serves as cofactor.

It carries out the reaction orotidine 5'-phosphate + diphosphate = orotate + 5-phospho-alpha-D-ribose 1-diphosphate. Its pathway is pyrimidine metabolism; UMP biosynthesis via de novo pathway; UMP from orotate: step 1/2. Catalyzes the transfer of a ribosyl phosphate group from 5-phosphoribose 1-diphosphate to orotate, leading to the formation of orotidine monophosphate (OMP). The chain is Orotate phosphoribosyltransferase from Clostridium acetobutylicum (strain ATCC 824 / DSM 792 / JCM 1419 / IAM 19013 / LMG 5710 / NBRC 13948 / NRRL B-527 / VKM B-1787 / 2291 / W).